A 131-amino-acid chain; its full sequence is Holo-[acyl-carrier-protein] synthase (131 aa).

Residues aspartate 8 and glutamate 57 each coordinate Mg(2+).

The protein belongs to the P-Pant transferase superfamily. AcpS family. The cofactor is Mg(2+).

It localises to the cytoplasm. The catalysed reaction is apo-[ACP] + CoA = holo-[ACP] + adenosine 3',5'-bisphosphate + H(+). Functionally, transfers the 4'-phosphopantetheine moiety from coenzyme A to a Ser of acyl-carrier-protein. The sequence is that of Holo-[acyl-carrier-protein] synthase from Thiobacillus denitrificans (strain ATCC 25259 / T1).